A 107-amino-acid polypeptide reads, in one-letter code: U1-lycotoxin-Ls1i (107 aa).

Positions 1–20 are cleaved as a signal peptide; sequence MMKVLVVVALLVTLISYSSS. Positions 21 to 41 are excised as a propeptide; that stretch reads EGIDDLEADELLSLMANEQTR. Cystine bridges form between Cys44-Cys59, Cys51-Cys68, Cys58-Cys86, and Cys70-Cys84.

Belongs to the neurotoxin 19 (CSTX) family. 04 (U1-Lctx) subfamily. As to expression, expressed by the venom gland.

It localises to the secreted. The sequence is that of U1-lycotoxin-Ls1i from Lycosa singoriensis (Wolf spider).